We begin with the raw amino-acid sequence, 221 residues long: Carbonic anhydrase (221 aa).

4 residues coordinate Zn(2+): Cys38, Asp40, His99, and Cys102.

This sequence belongs to the beta-class carbonic anhydrase family. Zn(2+) serves as cofactor.

It carries out the reaction hydrogencarbonate + H(+) = CO2 + H2O. The sequence is that of Carbonic anhydrase (cynT) from Helicobacter pylori (strain ATCC 700392 / 26695) (Campylobacter pylori).